The following is a 139-amino-acid chain: Protein cornichon homolog 4 (139 aa).

Helical transmembrane passes span 5 to 25 (VFVF…YFII), 57 to 77 (IVTV…NLPV), and 118 to 138 (LGFH…ALIN).

It belongs to the cornichon family. As to quaternary structure, interacts with Sec23/24 complex components SEC24B and SEC24D. Interacts with CCR5. Interacts with ADRB2 in the early secretory pathway.

Its subcellular location is the membrane. It localises to the endoplasmic reticulum. It is found in the endoplasmic reticulum-Golgi intermediate compartment. In terms of biological role, involved in G protein-coupled receptors (GPCRs) trafficking from the endoplasmic reticulum to the cell surface; it promotes the exit of GPCRs from the early secretory pathway, likely through interaction with the COPII machinery. The protein is Protein cornichon homolog 4 (CNIH4) of Homo sapiens (Human).